The primary structure comprises 170 residues: Plastocyanin, chloroplastic (170 aa).

A chloroplast-targeting transit peptide spans 1 to 71 (MATVTSAAVA…SAMLASNAMA (71 aa)). The Plastocyanin-like domain occupies 72–170 (LEVLLGGDDG…AGMVGKVTVN (99 aa)). Cu cation contacts are provided by His-108, Cys-155, His-158, and Met-163.

Belongs to the plastocyanin family. Cu(2+) serves as cofactor.

The protein localises to the plastid. It localises to the chloroplast thylakoid membrane. Its function is as follows. Participates in electron transfer between P700 and the cytochrome b6-f complex in photosystem I. The polypeptide is Plastocyanin, chloroplastic (PETE) (Solanum lycopersicum (Tomato)).